The chain runs to 441 residues: Mitochondrial inner membrane protein OXA1L (441 aa).

Over 1–113 the chain is Mitochondrial intermembrane; sequence MALALMCGRR…QAAAEQSFAE (113 aa). A helical transmembrane segment spans residues 114–134; that stretch reads LGLGSYTPVGLIQNLLEFMHV. At 135–139 the chain is on the mitochondrial matrix side; it reads NLGLP. A helical transmembrane segment spans residues 140-160; it reads WWGAIAACTVLARCLVFPLIV. The Mitochondrial intermembrane segment spans residues 161–212; the sequence is KGQREAAKIHNHLPEIQKFSARIREAKLTGNHTEFYRASSEMTFYQKKHDIK. The chain crosses the membrane as a helical span at residues 213–233; the sequence is LFRPLILPLTQAPIFISFFIA. At 234–260 the chain is on the mitochondrial matrix side; it reads LREMANLPVPSLQTGGLWWFQDLTLSD. A helical membrane pass occupies residues 261-281; it reads PIYVLPLVVTATMWGVLELGA. Over 282-298 the chain is Mitochondrial intermembrane; the sequence is ETGMQSSDLQWMRNFIR. A helical transmembrane segment spans residues 299–319; that stretch reads LMPLAVLPITIHFPTAVFMYW. Over 320–441 the chain is Mitochondrial matrix; that stretch reads LSSNMFSLGQ…SKQPWRDTLG (122 aa). Residue serine 364 is modified to Phosphoserine. Threonine 400 is modified (phosphothreonine). Positions 405-441 are disordered; that stretch reads PLLQHGKNDPPNTPNSSSSSSSSNKAKSKQPWRDTLG. Low complexity predominate over residues 418–429; sequence PNSSSSSSSSNK.

It belongs to the OXA1/ALB3/YidC family. Monomer; predominantly monomeric at low salt concentrations. Homooligomer; predominantly homooligomeric at high salt concentrations. Associates with the mitochondrial ribosome. Associates preferentially as a dimer with the large ribosomal subunit 39S of the mitochondrial ribosome. Interacts with OXA1L; promoting cotranslational quality control in mitochondria.

The protein localises to the mitochondrion inner membrane. Mitochondrial membrane insertase that mediates the cotranslational insertion of integral membrane proteins into the mitochondrial inner membrane. Essential for the activity and assembly of cytochrome oxidase. Required for the correct biogenesis of ATP synthase and complex I in mitochondria. The chain is Mitochondrial inner membrane protein OXA1L (OXA1L) from Bos taurus (Bovine).